A 369-amino-acid polypeptide reads, in one-letter code: ATP-dependent 6-phosphofructokinase (369 aa).

ATP contacts are provided by residues G15, 81 to 82 (KG), and 108 to 111 (GDGS). Residue D109 coordinates Mg(2+). Residues 132–134 (TID), R169, 176–178 (MGR), E230, R266, and 272–275 (HIQR) each bind substrate. The active-site Proton acceptor is D134.

It belongs to the phosphofructokinase type A (PFKA) family. Mixed-substrate PFK group III subfamily. Homodimer or homotetramer. The cofactor is Mg(2+).

It localises to the cytoplasm. It catalyses the reaction beta-D-fructose 6-phosphate + ATP = beta-D-fructose 1,6-bisphosphate + ADP + H(+). The protein operates within carbohydrate degradation; glycolysis; D-glyceraldehyde 3-phosphate and glycerone phosphate from D-glucose: step 3/4. Catalyzes the phosphorylation of D-fructose 6-phosphate to fructose 1,6-bisphosphate by ATP, the first committing step of glycolysis. This chain is ATP-dependent 6-phosphofructokinase, found in Thermosynechococcus vestitus (strain NIES-2133 / IAM M-273 / BP-1).